A 356-amino-acid chain; its full sequence is MACLTDLVNLNLSDTTEKIIAEYIWIGGSGMDLRSKARTLSGPVTDPSKLPKWNYDGSSTGQAPGEDSEVILYPQAIFKDPFRRGNNILVMCDCYTPAGEPIPTNKRYNAAKIFSSPEVAAEEPWYGIEQEYTLLQKDTNWPLGWPIGGFPGPQGPYYCGIGAEKSFGRDIVDAHYKACLYAGINISGINGEVMPGQWEFQVGPSVGISSGDQVWVARYILERITEIAGVVVTFDPKPIPGDWNGAGAHTNYSTESMRKEGGYEVIKAAIEKLKLRHREHIAAYGEGNDGRLTGRHETADINTFSWGVANRGASVRVGRETEQNGKGYFEDRRPASNMDPYVVTSMIAETTIIWKP.

Positions 19–99 (IIAEYIWIGG…VMCDCYTPAG (81 aa)) constitute a GS beta-grasp domain. One can recognise a GS catalytic domain in the interval 106-356 (KRYNAAKIFS…IAETTIIWKP (251 aa)).

It belongs to the glutamine synthetase family. As to quaternary structure, homooctamer. In terms of tissue distribution, found in all the tissues examined with higher expression found in tissues of the root.

The protein resides in the cytoplasm. It catalyses the reaction L-glutamate + NH4(+) + ATP = L-glutamine + ADP + phosphate + H(+). Functionally, plays a role in the flow of nitrogen into nitrogenous organic compounds. This chain is Glutamine synthetase root isozyme 3 (GLN4), found in Zea mays (Maize).